A 380-amino-acid chain; its full sequence is MAEQDLYKVLGVEKDASQDEIKKAYRKLSKKYHPDLNHEPGAEEKFKAVNEAYETLGDAQKRAQYDQFGSTGGQQGFGGAGGFGGQDFGGFGGGGGFEDIFSSFFGGGAGGSRRSNPTAPQQGRDLQYEMTLKFEDAIFGKKTTITYNREEQCETCGGSGAKPGTSPVTCSKCHGAGYIQVQTNTPLGRMMSQQVCDVCHGTGKEIKDKCATCGGSGHTEQSHSIKVTVPAGVEEGQQMRLQNQGEAGTNGGPYGDLFIIFRVEPSKDFERDGATIYFKLPIDFVQAALGDEVQVKTVHGDVKLKIPAGTQTGTTFRLRGKGAPRLRGNGNGDERVTVNIETPTHLNKGQKEALKTFAKASGKSVAGNGKSSLFDKLRGV.

One can recognise a J domain in the interval 5–69 (DLYKVLGVEK…QKRAQYDQFG (65 aa)). The segment at 140 to 222 (GKKTTITYNR…CGGSGHTEQS (83 aa)) adopts a CR-type zinc-finger fold. Zn(2+) is bound by residues Cys-153, Cys-156, Cys-170, Cys-173, Cys-196, Cys-199, Cys-210, and Cys-213. CXXCXGXG motif repeat units lie at residues 153-160 (CETCGGSG), 170-177 (CSKCHGAG), 196-203 (CDVCHGTG), and 210-217 (CATCGGSG).

Belongs to the DnaJ family. As to quaternary structure, homodimer. Zn(2+) is required as a cofactor.

The protein localises to the cytoplasm. In terms of biological role, participates actively in the response to hyperosmotic and heat shock by preventing the aggregation of stress-denatured proteins and by disaggregating proteins, also in an autonomous, DnaK-independent fashion. Unfolded proteins bind initially to DnaJ; upon interaction with the DnaJ-bound protein, DnaK hydrolyzes its bound ATP, resulting in the formation of a stable complex. GrpE releases ADP from DnaK; ATP binding to DnaK triggers the release of the substrate protein, thus completing the reaction cycle. Several rounds of ATP-dependent interactions between DnaJ, DnaK and GrpE are required for fully efficient folding. Also involved, together with DnaK and GrpE, in the DNA replication of plasmids through activation of initiation proteins. The polypeptide is Chaperone protein DnaJ (Lactiplantibacillus plantarum (strain ATCC BAA-793 / NCIMB 8826 / WCFS1) (Lactobacillus plantarum)).